Consider the following 175-residue polypeptide: Cytochrome c homolog (175 aa).

Topologically, residues 1–8 are cytoplasmic; sequence MSGKELNK. Residues 9–29 form a helical; Signal-anchor membrane-spanning segment; that stretch reads IVAAILFASLIAMMVGFVANI. Residues 30 to 175 are Periplasmic-facing; it reads LYKPTLELQH…LFLKTYVHDK (146 aa). Residues Cys84, Cys87, His88, and Met150 each coordinate heme c.

This sequence belongs to the cytochrome c family. Binds 1 heme c group covalently per subunit.

The protein localises to the cell membrane. Functionally, may be involved in electron transfer from bc1 complex to aa3. The protein is Cytochrome c homolog (cycM) of Rickettsia conorii (strain ATCC VR-613 / Malish 7).